We begin with the raw amino-acid sequence, 155 residues long: Ribosomal RNA large subunit methyltransferase H (155 aa).

S-adenosyl-L-methionine is bound by residues Leu72, Gly103, and 122–127 (LSALTL).

Belongs to the RNA methyltransferase RlmH family. In terms of assembly, homodimer.

It localises to the cytoplasm. It carries out the reaction pseudouridine(1915) in 23S rRNA + S-adenosyl-L-methionine = N(3)-methylpseudouridine(1915) in 23S rRNA + S-adenosyl-L-homocysteine + H(+). Its function is as follows. Specifically methylates the pseudouridine at position 1915 (m3Psi1915) in 23S rRNA. The sequence is that of Ribosomal RNA large subunit methyltransferase H from Shigella boydii serotype 18 (strain CDC 3083-94 / BS512).